Reading from the N-terminus, the 466-residue chain is FBD-associated F-box protein At5g22730 (466 aa).

Residues 27–80 (EDLISKLPDSLITQILLYLPIKDIVRTSSLSSRWKSLWLLIPRLDLDSEEFQDY) form the F-box domain. The 52-residue stretch at 385–436 (DEPIIFSSVPRCLVSSLESVEIKKFNGRPAKMEVARYFLENSGVLQKLVLHL) folds into the FBD domain.

The chain is FBD-associated F-box protein At5g22730 from Arabidopsis thaliana (Mouse-ear cress).